A 333-amino-acid chain; its full sequence is Taste receptor type 2 member 38 (333 aa).

At 1–17 (MLTLTRIHTVSYEVRST) the chain is on the extracellular side. The helical transmembrane segment at 18 to 38 (FLFISVLEFAVGFLTNAFVFL) threads the bilayer. Residues 39 to 55 (VNFWDVVKRQPLSNSDC) lie on the Cytoplasmic side of the membrane. A helical membrane pass occupies residues 56 to 76 (VLLCLSISRLFLHGLLFLSAI). The Extracellular segment spans residues 77–94 (QLTHFQKLSEPLNHSYQA). The helical transmembrane segment at 95–115 (IIMLWMIANQANLWLAACLSL) threads the bilayer. The Cytoplasmic segment spans residues 116 to 142 (LYCSKLIRFSHTFLICLASWVSRKISQ). A helical membrane pass occupies residues 143 to 163 (MLLGIILCSCICTVLCVWCFF). The Extracellular segment spans residues 164–190 (SRPHFTVTTVLFMNNNTRLNWQIKDLN). N-linked (GlcNAc...) asparagine glycosylation occurs at Asn-178. Residues 191–211 (LFYSFLFCYLWSVPPFLLFLV) traverse the membrane as a helical segment. Topologically, residues 212 to 251 (SSGMLTVSLGRHMRTMKVYTRDSRDPSLEAHIKALKSLVS) are cytoplasmic. A helical membrane pass occupies residues 252–272 (FFCFFVISSCAAFISVPLLIL). At 273 to 276 (WRDK) the chain is on the extracellular side. A helical membrane pass occupies residues 277-297 (IGVMVCVGIMAACPSGHAAVL). Over 298–333 (ISGNAKLRRAVTTILLWAQSSLKVRADHKADSRTLC) the chain is Cytoplasmic.

This sequence belongs to the G-protein coupled receptor T2R family.

It localises to the membrane. Functionally, receptor that may play a role in the perception of bitterness and is gustducin-linked. May play a role in sensing the chemical composition of the gastrointestinal content. The activity of this receptor may stimulate alpha gustducin, mediate PLC-beta-2 activation and lead to the gating of TRPM5. The chain is Taste receptor type 2 member 38 (TAS2R38) from Pan troglodytes (Chimpanzee).